The sequence spans 183 residues: dCTP deaminase (183 aa).

106–111 (KSTYAR) serves as a coordination point for dCTP. Catalysis depends on E132, which acts as the Proton donor/acceptor. 3 residues coordinate dCTP: Q151, Y165, and Q175.

This sequence belongs to the dCTP deaminase family. As to quaternary structure, homotrimer.

The enzyme catalyses dCTP + H2O + H(+) = dUTP + NH4(+). The protein operates within pyrimidine metabolism; dUMP biosynthesis; dUMP from dCTP (dUTP route): step 1/2. In terms of biological role, catalyzes the deamination of dCTP to dUTP. This is dCTP deaminase from Gluconobacter oxydans (strain 621H) (Gluconobacter suboxydans).